The chain runs to 349 residues: Estrogen receptor (349 aa).

A DNA-binding region (nuclear receptor) is located at residues 1-5 (YEVGM). The tract at residues 1–38 (YEVGMMKGGIRKDRRGGRMLKHKRQREENDSRNAGALT) is disordered. Residues 12-24 (KDRRGGRMLKHKR) are compositionally biased toward basic residues. In terms of domain architecture, NR LBD spans 65 to 301 (TADQMVSALL…DLLLEMLDAH (237 aa)). Positions 306–327 (PAAKGSPPSEDDPLNQLAVPSP) are disordered.

It belongs to the nuclear hormone receptor family. NR3 subfamily. In terms of assembly, binds DNA as a homodimer. Can form a heterodimer with ER-beta.

It localises to the nucleus. The steroid hormones and their receptors are involved in the regulation of eukaryotic gene expression and affect cellular proliferation and differentiation in target tissues. This chain is Estrogen receptor (ESR1), found in Anolis carolinensis (Green anole).